A 61-amino-acid chain; its full sequence is Potassium channel toxin alpha-KTx 6.8 (61 aa).

A signal peptide spans 1–23; that stretch reads MNAKFILLLLVVTTTILLPDTQG. Cystine bridges form between Cys29–Cys50, Cys35–Cys55, Cys39–Cys57, and Cys45–Cys60. Cysteine amide is present on Cys60.

Belongs to the short scorpion toxin superfamily. Potassium channel inhibitor family. Alpha-KTx 06 subfamily. As to expression, expressed by the venom gland.

It localises to the secreted. Its function is as follows. Blocker of voltage-gated potassium channels. The protein is Potassium channel toxin alpha-KTx 6.8 of Opistophthalmus carinatus (African yellow leg scorpion).